The primary structure comprises 662 residues: Protein Aster-C (662 aa).

The disordered stretch occupies residues 1–33; the sequence is MEGALTARQIVNEGDSSLATELQEEPEESPGPV. A GRAM domain is found at 70–176; sequence EYRQQFTHLP…LIIFRLWQNV (107 aa). The tract at residues 212–294 is disordered; sequence VEENVQPRSP…EKRISRAPSK (83 aa). The span at 240 to 250 shows a compositional bias: polar residues; the sequence is VSFTQESVSRA. The segment covering 265 to 276 has biased composition (basic and acidic residues); that stretch reads LGKEDSQSERNV. The 172-residue stretch at 326-497 folds into the VASt domain; that stretch reads QGRLYINRVF…DLLMEESVLS (172 aa). Residues 506-530 form a disordered region; that stretch reads HSSLRRRRRTLNRTAEPVPKLSSQR. The span at 507–516 shows a compositional bias: basic residues; that stretch reads SSLRRRRRTL. The helical transmembrane segment at 557 to 577 threads the bilayer; sequence LIVVMSIFLLLLVLLNVTLFL.

Highly expressed in the liver. Also found in the testis.

The protein resides in the endoplasmic reticulum membrane. Its subcellular location is the cell membrane. In terms of biological role, cholesterol transporter that mediates non-vesicular transport of cholesterol from the plasma membrane (PM) to the endoplasmic reticulum (ER). Contains unique domains for binding cholesterol and the PM, thereby serving as a molecular bridge for the transfer of cholesterol from the PM to the ER. Plays a crucial role in cholesterol homeostasis and has the unique ability to localize to the PM based on the level of membrane cholesterol. In lipid-poor conditions localizes to the ER membrane and in response to excess cholesterol in the PM is recruited to the endoplasmic reticulum-plasma membrane contact sites (EPCS) which is mediated by the GRAM domain. At the EPCS, the sterol-binding VASt/ASTER domain binds to the cholesterol in the PM and facilitates its transfer from the PM to ER. The protein is Protein Aster-C (Gramd1c) of Mus musculus (Mouse).